The following is a 448-amino-acid chain: MSENTFIFPATFMWGTSTSSYQIEGGTDEGGRTPSIWDTFCQIPGKVIGGDCGDVACDHFHHFKEDVQLMKQLGFLHYRFSVAWPRIMPAAGIINEEGLLFYEHLLDEIELAGLIPMLTLYHWDLPQWIEDEGGWTQRETIQHFKTYASVIMDRFGERINWWNTINEPYCASILGYGTGEHAPGHENWREAFTAAHHILMCHGIASNLHKEKGLTGKIGITLNMEHVDAASERPEDVAAAIRRDGFINRWFAEPLFNGKYPEDMVEWYGTYLNGLDFVQPGDMELIQQPGDFLGINYYTRSIIRSTNDASLLQVEQVHMEEPVTDMGWEIHPESFYKLLTRIEKDFSKGLPILITENGAAMRDELVNGQIEDTGRHGYIEEHLKACHRFIEEGGQLKGYFVWSFLDNFEWAWGYSKRFGIVHINYETQERTPKQSALWFKQMMAKNGF.

E167 acts as the Proton donor in catalysis. The active-site Nucleophile is the E356.

Belongs to the glycosyl hydrolase 1 family.

The catalysed reaction is Hydrolysis of terminal, non-reducing beta-D-glucosyl residues with release of beta-D-glucose.. This is Beta-glucosidase B (bglB) from Paenibacillus polymyxa (Bacillus polymyxa).